The chain runs to 96 residues: Co-chaperonin GroES (96 aa).

It belongs to the GroES chaperonin family. Heptamer of 7 subunits arranged in a ring. Interacts with the chaperonin GroEL.

It localises to the cytoplasm. In terms of biological role, together with the chaperonin GroEL, plays an essential role in assisting protein folding. The GroEL-GroES system forms a nano-cage that allows encapsulation of the non-native substrate proteins and provides a physical environment optimized to promote and accelerate protein folding. GroES binds to the apical surface of the GroEL ring, thereby capping the opening of the GroEL channel. This is Co-chaperonin GroES from Nitrosomonas eutropha (strain DSM 101675 / C91 / Nm57).